An 89-amino-acid polypeptide reads, in one-letter code: Small ribosomal subunit protein uS15 (89 aa).

Belongs to the universal ribosomal protein uS15 family. In terms of assembly, part of the 30S ribosomal subunit. Forms a bridge to the 50S subunit in the 70S ribosome, contacting the 23S rRNA.

Functionally, one of the primary rRNA binding proteins, it binds directly to 16S rRNA where it helps nucleate assembly of the platform of the 30S subunit by binding and bridging several RNA helices of the 16S rRNA. Forms an intersubunit bridge (bridge B4) with the 23S rRNA of the 50S subunit in the ribosome. This chain is Small ribosomal subunit protein uS15, found in Serratia proteamaculans (strain 568).